The sequence spans 338 residues: tRNA-specific 2-thiouridylase MnmA (338 aa).

ATP is bound by residues 6-13 (AMSGGVDS) and Met-32. Cys-92 acts as the Nucleophile in catalysis. Cys-92 and Cys-186 are joined by a disulfide. Residue Gly-116 participates in ATP binding. The segment at 134–136 (KDQ) is interaction with tRNA. Cys-186 serves as the catalytic Cysteine persulfide intermediate. The interval 288 to 289 (RY) is interaction with tRNA.

This sequence belongs to the MnmA/TRMU family.

Its subcellular location is the cytoplasm. The enzyme catalyses S-sulfanyl-L-cysteinyl-[protein] + uridine(34) in tRNA + AH2 + ATP = 2-thiouridine(34) in tRNA + L-cysteinyl-[protein] + A + AMP + diphosphate + H(+). In terms of biological role, catalyzes the 2-thiolation of uridine at the wobble position (U34) of tRNA, leading to the formation of s(2)U34. The protein is tRNA-specific 2-thiouridylase MnmA of Campylobacter jejuni subsp. jejuni serotype O:2 (strain ATCC 700819 / NCTC 11168).